The following is a 656-amino-acid chain: Translation factor GUF1 homolog, mitochondrial (656 aa).

A tr-type G domain is found at Gln-55–Asp-236. Residues Ala-64 to Ser-71, Asp-129 to His-133, and Asn-183 to Asp-186 each bind GTP.

Belongs to the TRAFAC class translation factor GTPase superfamily. Classic translation factor GTPase family. LepA subfamily.

Its subcellular location is the mitochondrion inner membrane. The enzyme catalyses GTP + H2O = GDP + phosphate + H(+). In terms of biological role, promotes mitochondrial protein synthesis. May act as a fidelity factor of the translation reaction, by catalyzing a one-codon backward translocation of tRNAs on improperly translocated ribosomes. Binds to mitochondrial ribosomes in a GTP-dependent manner. This Aedes aegypti (Yellowfever mosquito) protein is Translation factor GUF1 homolog, mitochondrial.